Reading from the N-terminus, the 411-residue chain is Putative competence-damage inducible protein (411 aa).

It belongs to the CinA family.

This chain is Putative competence-damage inducible protein, found in Clostridium acetobutylicum (strain ATCC 824 / DSM 792 / JCM 1419 / IAM 19013 / LMG 5710 / NBRC 13948 / NRRL B-527 / VKM B-1787 / 2291 / W).